A 376-amino-acid chain; its full sequence is Probable sister chromatid cohesion protein DCC1 (376 aa).

Positions 213-232 are disordered; that stretch reads QKSPTNSGGGGEEIKGGGGD. Positions 219-232 are enriched in gly residues; sequence SGGGGEEIKGGGGD.

It belongs to the DCC1 family.

The protein resides in the nucleus. Functionally, loads PCNA onto primed templates regulating velocity, spacing and restart activity of replication forks. May couple DNA replication to sister chromatid cohesion. The sequence is that of Probable sister chromatid cohesion protein DCC1 from Dictyostelium discoideum (Social amoeba).